A 1256-amino-acid polypeptide reads, in one-letter code: MEEEDESRGKTEESGEDRGDGPPDRDPALSPSAFILRAIQQAVGSSLQGDLPNDKDGARCRGLRWRRCCRSPRSEPRSQESGAADTATVLDTAADSFLVELVSILDPPDTWVPSRLDLQPGESEDMLELVAEVRIGDRDPMPLPVPSLFPRLRAWRTGKTVSPQSHASRPACSRHLTLGTGDGGPAPPPAPSSASSSPSPSPSSSSPSPPPPPPPPPPPALPAPRFDIYDPFHPTDEAYSPPPAPEQKYDPFEPTGSNPSSSAGTPSPEEEEEEEEEEEEEGLSQSISRISETLAGIYDDNSLSQDFPGDDSPRREPPPPQTLGAPGTPPQADSTRAEGAPRRRVFVLGPEAEACHEGKVSVEVVTAGAPALSLPPLPPTDPEIEEGEIVQPEEEPRVAVSLFRAARPRQPPASVATLASVAAPAAPPASAPRAPEGDDFLSLHADSDGEGALQVDLGEPPAPPAADARWGGLDLRRKILTQRRERYRQRSASPGPPPARKKARRERQRSGDPAPPDSPSWEAKKHRSRERKLGSHSTARRRSRSRSRRRSRSRSADRRRGGHRSRSREKRRRRRRSASPPPAASSSSSSRRERHRGKRREGGKKKKKRSRSRAEKRSGDLEKLPASVPPSGSDRDSRRRGAVPPSIQDLTDHDLFAIKRTITVGRPDKAEPRAPSPAPAVSPKREVLYDSEGLSADERGGKSDKDRRRSGAASSSSSSREKGSRRKALDGDRGRDRDRSSKKTRPPKDSTPGSGPLPKAPPSSGSSSSSSSCSSRKVKLQSKVAVLIREGVSSTTPAKDSSSSGLGSIGVKFSRDRESRSPFLKPDERAPAEVAKVAPGSNKPKKTKAKAKAGAKKAKGTKGKTKPSKTRKKVRSGGSSTASGGPGSLKKSKADSCSQAASAKGTEETSWSGEERTTKAPSTPPPKVAPPPPALTPDSQTVDSSCKTPEVSFLPEEASEDTGVRVGAEEEEEEEEEEEEEEEQQPATTTATSTAAAAPSTAPSAGSTAGDSGAEDGPAARISQLPTLPPPMPWNLPAGVDCTTSGVLALTALLFKMEEANLASRAKAQELIQATNQILSHRKPSSTLGVTPAPVPTSLGLPPGPSSYLLPGSLPIGGCGSTPPTPTGLAPASDKREGSSSSEGRGDTDKYLKKLHTQERAVEEVKLAIKPYYQKKDITKEEYKDILRKAVHKICHSKSGEINPVKVSNLVRAYVQRYRYFRKHGRKPGDPPGPPRPPKEPGPPDKGGPGLPLPPL.

6 disordered regions span residues methionine 1–alanine 33, glycine 158–arginine 343, alanine 371–glutamate 395, proline 408–proline 1030, glycine 1112–leucine 1152, and phenylalanine 1221–leucine 1256. The segment covering serine 7–proline 27 has biased composition (basic and acidic residues). Over residues serine 192–serine 206 the composition is skewed to low complexity. Over residues proline 207–proline 222 the composition is skewed to pro residues. A compositionally biased stretch (basic and acidic residues) spans aspartate 227–aspartate 236. The residue at position 240 (serine 240) is a Phosphoserine. Positions threonine 255–threonine 265 are enriched in polar residues. The span at proline 268–glycine 282 shows a compositional bias: acidic residues. Threonine 328 carries the post-translational modification Phosphothreonine. Over residues proline 382 to glutamate 393 the composition is skewed to acidic residues. Low complexity predominate over residues proline 412–proline 424. A phosphoserine mark is found at serine 442 and serine 447. The segment covering lysine 478 to glutamine 489 has biased composition (basic residues). Phosphoserine occurs at positions 491, 493, 510, 518, and 520. Basic residues-rich tracts occupy residues threonine 538 to serine 553 and arginine 560 to serine 577. Serine 577 and serine 579 each carry phosphoserine. Over residues arginine 592 to arginine 611 the composition is skewed to basic residues. Residues serine 612–lysine 623 are compositionally biased toward basic and acidic residues. Threonine 663 carries the phosphothreonine modification. 2 positions are modified to phosphoserine: serine 676 and serine 682. A Phosphotyrosine modification is found at tyrosine 689. Phosphoserine occurs at positions 691 and 695. Basic and acidic residues-rich tracts occupy residues alanine 696 to arginine 709 and serine 719 to serine 741. 2 stretches are compositionally biased toward low complexity: residues proline 752–serine 775 and serine 793–serine 804. Residue lysine 812 forms a Glycyl lysine isopeptide (Lys-Gly) (interchain with G-Cter in SUMO2) linkage. The span at phenylalanine 813–proline 831 shows a compositional bias: basic and acidic residues. 2 positions are modified to phosphoserine: serine 819 and serine 821. Over residues lysine 843–arginine 875 the composition is skewed to basic residues. Phosphoserine is present on residues serine 876, serine 883, serine 910, and serine 912. Residues serine 922 to leucine 935 are compositionally biased toward pro residues. Phosphothreonine is present on residues threonine 923 and threonine 936. Over residues aspartate 938–lysine 947 the composition is skewed to polar residues. Position 939 is a phosphoserine (serine 939). Phosphothreonine is present on threonine 948. Residues glutamate 969–glutamine 984 are compositionally biased toward acidic residues. Positions glutamine 985 to glycine 1017 are enriched in low complexity. Residues proline 1131–leucine 1256 are necessary for interaction with the CTD domain of POLR2A. Over residues serine 1133 to leucine 1152 the composition is skewed to basic and acidic residues. Residues proline 1244–leucine 1256 show a composition bias toward pro residues.

The protein belongs to the splicing factor SR family. Interacts with POLR2A.

The protein resides in the nucleus. In terms of biological role, may function in pre-mRNA splicing. This is Splicing factor, arginine/serine-rich 19 (Scaf1) from Mus musculus (Mouse).